The following is a 102-amino-acid chain: Small ribosomal subunit protein uS10 (102 aa).

Belongs to the universal ribosomal protein uS10 family. As to quaternary structure, part of the 30S ribosomal subunit.

Its function is as follows. Involved in the binding of tRNA to the ribosomes. In Methanococcus maripaludis (strain C6 / ATCC BAA-1332), this protein is Small ribosomal subunit protein uS10.